The sequence spans 644 residues: Threonine--tRNA ligase (644 aa).

Positions 1 to 61 (MINVTLPDGS…DGDAQVAIIT (61 aa)) constitute a TGS domain. The catalytic stretch occupies residues 243-536 (DHRKLGKQME…LIESYAGKLP (294 aa)). Zn(2+) contacts are provided by Cys-336, His-387, and His-513.

It belongs to the class-II aminoacyl-tRNA synthetase family. Homodimer. Zn(2+) is required as a cofactor.

Its subcellular location is the cytoplasm. It catalyses the reaction tRNA(Thr) + L-threonine + ATP = L-threonyl-tRNA(Thr) + AMP + diphosphate + H(+). Functionally, catalyzes the attachment of threonine to tRNA(Thr) in a two-step reaction: L-threonine is first activated by ATP to form Thr-AMP and then transferred to the acceptor end of tRNA(Thr). Also edits incorrectly charged L-seryl-tRNA(Thr). The polypeptide is Threonine--tRNA ligase (Maricaulis maris (strain MCS10) (Caulobacter maris)).